The primary structure comprises 67 residues: MILKPSKPYSFCFTTYPWKKLKLKEHSKVIIKIIDEEEIEKILDSMIIEKVEGIDYKKLKETHYESL.

Belongs to the UPF0165 family.

Functionally, possibly the antitoxin component of a type II toxin-antitoxin (TA) system. The sequence is that of Putative antitoxin PF1308 from Pyrococcus furiosus (strain ATCC 43587 / DSM 3638 / JCM 8422 / Vc1).